Reading from the N-terminus, the 113-residue chain is Outer membrane protein assembly factor BamE (113 aa).

A signal peptide spans 1-19; it reads MRCKTLTAAAAVLLMLTAG. A lipid anchor (N-palmitoyl cysteine) is attached at C20. C20 carries the S-diacylglycerol cysteine lipid modification.

The protein belongs to the BamE family. As to quaternary structure, part of the Bam complex, which is composed of the outer membrane protein BamA, and four lipoproteins BamB, BamC, BamD and BamE.

Its subcellular location is the cell outer membrane. Its function is as follows. Part of the outer membrane protein assembly complex, which is involved in assembly and insertion of beta-barrel proteins into the outer membrane. The chain is Outer membrane protein assembly factor BamE from Escherichia coli O6:H1 (strain CFT073 / ATCC 700928 / UPEC).